We begin with the raw amino-acid sequence, 472 residues long: 3-isopropylmalate dehydratase large subunit (472 aa).

The interval 61 to 80 (TPDHNVPTTQKERASGVEGI) is disordered. [4Fe-4S] cluster is bound by residues Cys353, Cys414, and Cys417.

Belongs to the aconitase/IPM isomerase family. LeuC type 1 subfamily. Heterodimer of LeuC and LeuD. [4Fe-4S] cluster serves as cofactor.

The enzyme catalyses (2R,3S)-3-isopropylmalate = (2S)-2-isopropylmalate. The protein operates within amino-acid biosynthesis; L-leucine biosynthesis; L-leucine from 3-methyl-2-oxobutanoate: step 2/4. Its function is as follows. Catalyzes the isomerization between 2-isopropylmalate and 3-isopropylmalate, via the formation of 2-isopropylmaleate. This is 3-isopropylmalate dehydratase large subunit from Saccharophagus degradans (strain 2-40 / ATCC 43961 / DSM 17024).